The primary structure comprises 567 residues: MSTSVFNRRWAALLLEALTRHGVRHICIAPGSRSTPLTLAAAANPSLVCHTHFDERGLGHLALGLAKASTEPVAVIVTSGTAVANLYPALIEAGLTGERLILLTADRPPELIDCGANQAIRQQGLFASHPTLSVNLPRPTPDISARWLVSTLDSAMAQLQHGALHINCPFAEPLYGGDEQQYADWSASLGDWWQDCHPWLRQTCYPPSLYQPLAQQADWFFWRQKRGVVIAGRMGAEEGRQLTAWAAMLGWPLIGDVLSQTGQPLPCADLWLAHPRAQETLAQAQIVLQFGSSLTSKRLLQWQTACQPQEYWLVDSAPGRLDPANHRGRRIICPVGEWLSRHPAQRRTPWATELAVYSESAQAQVIETLSGQFSEAAVAHQLAELLPDNGQLFVGNSLIVRLIDALGQLPAGYPVYSNRGASGIDGLLSTAAGVQRATAKPTLAIVGDLSALYDLNALALLRQSSAPMVLLVINNNGGQIFSLLPTPEAERQRFYCMPQDVNFEHAAVMFSLGYARPNSWPQLREHVHQCWLRGGTTLIEVQVPPSQGAETLQQLVQQVTLIPQVAP.

It belongs to the TPP enzyme family. MenD subfamily. Homodimer. The cofactor is Mg(2+). Mn(2+) is required as a cofactor. Requires thiamine diphosphate as cofactor.

It catalyses the reaction isochorismate + 2-oxoglutarate + H(+) = 5-enolpyruvoyl-6-hydroxy-2-succinyl-cyclohex-3-ene-1-carboxylate + CO2. It functions in the pathway quinol/quinone metabolism; 1,4-dihydroxy-2-naphthoate biosynthesis; 1,4-dihydroxy-2-naphthoate from chorismate: step 2/7. Its pathway is quinol/quinone metabolism; menaquinone biosynthesis. Its function is as follows. Catalyzes the thiamine diphosphate-dependent decarboxylation of 2-oxoglutarate and the subsequent addition of the resulting succinic semialdehyde-thiamine pyrophosphate anion to isochorismate to yield 2-succinyl-5-enolpyruvyl-6-hydroxy-3-cyclohexene-1-carboxylate (SEPHCHC). The polypeptide is 2-succinyl-5-enolpyruvyl-6-hydroxy-3-cyclohexene-1-carboxylate synthase (Yersinia pseudotuberculosis serotype I (strain IP32953)).